The primary structure comprises 358 residues: Nuclear receptor subfamily 1 group I member 3 (358 aa).

The nuclear receptor DNA-binding region spans 18–93 (PRNCVVCGDR…VGMRKDMILS (76 aa)). The NR C4-type zinc-finger motif lies at 21–41 (CVVCGDRATGYHFHALTCEGC). Residue Thr-48 is modified to Phosphothreonine; by PKC. The NR C4-type zinc finger occupies 57–81 (CPFAGRCEVSKAQRRHCPACRLQKC). Residues 119–358 (QQKELVQILL…MTPLLGEICS (240 aa)) form the NR LBD domain.

It belongs to the nuclear hormone receptor family. NR1 subfamily. In terms of assembly, heterodimer of NR1I3 and RXR. Interacts with PSMC4. Interacts with ECT2. Directly interacts with DNAJC7; this complex may also include HSP90. Interacts with CRY1. Interacts with CRY2 in a ligand-dependent manner. Phosphorylated at Thr-48 by PKC, dephosphorylation of Thr-48 is required for nuclear translocation and activation. As to expression, predominantly expressed in liver.

Its subcellular location is the nucleus. It localises to the cytoplasm. The protein resides in the cytoskeleton. Binds and transactivates the retinoic acid response elements that control expression of the retinoic acid receptor beta 2 and alcohol dehydrogenase 3 genes. Transactivates both the phenobarbital responsive element module of the human CYP2B6 gene and the CYP3A4 xenobiotic response element. This chain is Nuclear receptor subfamily 1 group I member 3 (Nr1i3), found in Mus musculus (Mouse).